The sequence spans 387 residues: Phosphoglycerate kinase (387 aa).

Substrate contacts are provided by residues 21–23 (DLN), R36, 59–62 (HLGR), R113, and R146. Residues K197, E314, and 340–343 (GGDT) each bind ATP.

This sequence belongs to the phosphoglycerate kinase family. Monomer.

The protein resides in the cytoplasm. It catalyses the reaction (2R)-3-phosphoglycerate + ATP = (2R)-3-phospho-glyceroyl phosphate + ADP. Its pathway is carbohydrate degradation; glycolysis; pyruvate from D-glyceraldehyde 3-phosphate: step 2/5. The polypeptide is Phosphoglycerate kinase (Pectobacterium carotovorum subsp. carotovorum (strain PC1)).